Consider the following 215-residue polypeptide: 3-isopropylmalate dehydratase small subunit (215 aa).

This sequence belongs to the LeuD family. LeuD type 1 subfamily. Heterodimer of LeuC and LeuD.

It carries out the reaction (2R,3S)-3-isopropylmalate = (2S)-2-isopropylmalate. It functions in the pathway amino-acid biosynthesis; L-leucine biosynthesis; L-leucine from 3-methyl-2-oxobutanoate: step 2/4. In terms of biological role, catalyzes the isomerization between 2-isopropylmalate and 3-isopropylmalate, via the formation of 2-isopropylmaleate. The polypeptide is 3-isopropylmalate dehydratase small subunit (Ectopseudomonas mendocina (strain ymp) (Pseudomonas mendocina)).